A 144-amino-acid chain; its full sequence is MRQTTIVNREKANKKWFVVDAENQVVGRLAAFVASVLRGKTKPTFTPNADMGDYVIIINAEKAIFTAKKEEDKVYYHHSGYPGGLKSITAAKLRAKKPTAIVEKAIYGMLPHTKLGNKQRRNLFVVAGSEHKYAAQKPERLEVR.

The protein belongs to the universal ribosomal protein uL13 family. In terms of assembly, part of the 50S ribosomal subunit.

In terms of biological role, this protein is one of the early assembly proteins of the 50S ribosomal subunit, although it is not seen to bind rRNA by itself. It is important during the early stages of 50S assembly. The protein is Large ribosomal subunit protein uL13 of Mycoplasmopsis agalactiae (strain NCTC 10123 / CIP 59.7 / PG2) (Mycoplasma agalactiae).